The primary structure comprises 269 residues: 3-methyl-2-oxobutanoate hydroxymethyltransferase (269 aa).

Mg(2+)-binding residues include aspartate 51 and aspartate 90. 3-methyl-2-oxobutanoate-binding positions include 51–52 (DS), aspartate 90, and lysine 120. A Mg(2+)-binding site is contributed by glutamate 122. Catalysis depends on glutamate 187, which acts as the Proton acceptor.

The protein belongs to the PanB family. Homodecamer; pentamer of dimers. Mg(2+) serves as cofactor.

It is found in the cytoplasm. The enzyme catalyses 3-methyl-2-oxobutanoate + (6R)-5,10-methylene-5,6,7,8-tetrahydrofolate + H2O = 2-dehydropantoate + (6S)-5,6,7,8-tetrahydrofolate. It participates in cofactor biosynthesis; (R)-pantothenate biosynthesis; (R)-pantoate from 3-methyl-2-oxobutanoate: step 1/2. Its function is as follows. Catalyzes the reversible reaction in which hydroxymethyl group from 5,10-methylenetetrahydrofolate is transferred onto alpha-ketoisovalerate to form ketopantoate. This chain is 3-methyl-2-oxobutanoate hydroxymethyltransferase, found in Tropheryma whipplei (strain TW08/27) (Whipple's bacillus).